Here is a 138-residue protein sequence, read N- to C-terminus: Cysteine desulfuration protein SufE (138 aa).

Cys-51 (cysteine persulfide intermediate) is an active-site residue.

Belongs to the SufE family. As to quaternary structure, homodimer. Interacts with SufS.

It is found in the cytoplasm. It functions in the pathway cofactor biosynthesis; iron-sulfur cluster biosynthesis. In terms of biological role, participates in cysteine desulfuration mediated by SufS. Cysteine desulfuration mobilizes sulfur from L-cysteine to yield L-alanine and constitutes an essential step in sulfur metabolism for biosynthesis of a variety of sulfur-containing biomolecules. Functions as a sulfur acceptor for SufS, by mediating the direct transfer of the sulfur atom from the S-sulfanylcysteine of SufS, an intermediate product of cysteine desulfuration process. This Pectobacterium atrosepticum (strain SCRI 1043 / ATCC BAA-672) (Erwinia carotovora subsp. atroseptica) protein is Cysteine desulfuration protein SufE.